The primary structure comprises 411 residues: 1-deoxy-D-xylulose 5-phosphate reductoisomerase (411 aa).

NADPH is bound by residues Thr23, Gly24, Ser25, Ile26, Gly49, Arg50, Asn51, and Asn137. Residue Lys138 coordinates 1-deoxy-D-xylulose 5-phosphate. NADPH is bound at residue Glu139. Residue Asp163 coordinates Mn(2+). Residues Ser164, Glu165, Ser199, and His222 each contribute to the 1-deoxy-D-xylulose 5-phosphate site. Glu165 contacts Mn(2+). Gly228 lines the NADPH pocket. Ser235, Asn240, Lys241, and Glu244 together coordinate 1-deoxy-D-xylulose 5-phosphate. Glu244 contacts Mn(2+).

It belongs to the DXR family. Requires Mg(2+) as cofactor. It depends on Mn(2+) as a cofactor.

The catalysed reaction is 2-C-methyl-D-erythritol 4-phosphate + NADP(+) = 1-deoxy-D-xylulose 5-phosphate + NADPH + H(+). Its pathway is isoprenoid biosynthesis; isopentenyl diphosphate biosynthesis via DXP pathway; isopentenyl diphosphate from 1-deoxy-D-xylulose 5-phosphate: step 1/6. Catalyzes the NADPH-dependent rearrangement and reduction of 1-deoxy-D-xylulose-5-phosphate (DXP) to 2-C-methyl-D-erythritol 4-phosphate (MEP). The chain is 1-deoxy-D-xylulose 5-phosphate reductoisomerase from Mannheimia succiniciproducens (strain KCTC 0769BP / MBEL55E).